Consider the following 364-residue polypeptide: Protein trichome birefringence-like 40 (364 aa).

Residues 9–25 form a helical; Signal-anchor for type II membrane protein membrane-spanning segment; sequence LASLSLILFSSFPGLLA. The GDS motif signature appears at 118-120; it reads GDS. The DCXHWCLPGXXDXWN motif motif lies at 341-355; sequence DCSHWCLPGLPDTWN.

The protein belongs to the PC-esterase family. TBL subfamily.

It is found in the membrane. Its function is as follows. May act as a bridging protein that binds pectin and other cell wall polysaccharides. Probably involved in maintaining esterification of pectins. May be involved in the specific O-acetylation of cell wall polymers. The sequence is that of Protein trichome birefringence-like 40 (TBL40) from Arabidopsis thaliana (Mouse-ear cress).